The following is a 523-amino-acid chain: Jerky protein homolog-like (523 aa).

Residues Met1–Ile52 form the HTH psq-type domain. DNA-binding regions (H-T-H motif) lie at residues Ser28–Asn48 and Pro100–Arg132. Residues Lys67–Asn139 enclose the HTH CENPB-type domain. In terms of domain architecture, DDE-1 spans Leu168–Trp385.

The protein belongs to the tigger transposable element derived protein family.

The protein localises to the nucleus. This Mus musculus (Mouse) protein is Jerky protein homolog-like (Jrkl).